The primary structure comprises 286 residues: Formamidopyrimidine-DNA glycosylase (286 aa).

Residue Pro2 is the Schiff-base intermediate with DNA of the active site. Glu3 functions as the Proton donor in the catalytic mechanism. Catalysis depends on Lys61, which acts as the Proton donor; for beta-elimination activity. Positions 96, 115, and 161 each coordinate DNA. The FPG-type zinc-finger motif lies at 247 to 281 (EAYGREGEPCRRCGRAMRREAFMNRSSYFCPSCQR). The active-site Proton donor; for delta-elimination activity is the Arg271.

Belongs to the FPG family. Monomer. Zn(2+) is required as a cofactor.

The enzyme catalyses Hydrolysis of DNA containing ring-opened 7-methylguanine residues, releasing 2,6-diamino-4-hydroxy-5-(N-methyl)formamidopyrimidine.. It catalyses the reaction 2'-deoxyribonucleotide-(2'-deoxyribose 5'-phosphate)-2'-deoxyribonucleotide-DNA = a 3'-end 2'-deoxyribonucleotide-(2,3-dehydro-2,3-deoxyribose 5'-phosphate)-DNA + a 5'-end 5'-phospho-2'-deoxyribonucleoside-DNA + H(+). Involved in base excision repair of DNA damaged by oxidation or by mutagenic agents. Acts as a DNA glycosylase that recognizes and removes damaged bases. Has a preference for oxidized purines, such as 7,8-dihydro-8-oxoguanine (8-oxoG). Has AP (apurinic/apyrimidinic) lyase activity and introduces nicks in the DNA strand. Cleaves the DNA backbone by beta-delta elimination to generate a single-strand break at the site of the removed base with both 3'- and 5'-phosphates. In Mycobacteroides abscessus (strain ATCC 19977 / DSM 44196 / CCUG 20993 / CIP 104536 / JCM 13569 / NCTC 13031 / TMC 1543 / L948) (Mycobacterium abscessus), this protein is Formamidopyrimidine-DNA glycosylase.